A 508-amino-acid chain; its full sequence is Photosystem II CP47 reaction center protein (508 aa).

Helical transmembrane passes span 21 to 36 (AVHI…WAGS), 101 to 115 (IVFS…IWHW), 140 to 156 (GIHL…FGAF), 203 to 218 (IAAG…FHLS), 237 to 252 (VLSS…AFIV), and 457 to 472 (TFAL…HGAR).

Belongs to the PsbB/PsbC family. PsbB subfamily. As to quaternary structure, PSII is composed of 1 copy each of membrane proteins PsbA, PsbB, PsbC, PsbD, PsbE, PsbF, PsbH, PsbI, PsbJ, PsbK, PsbL, PsbM, PsbT, PsbX, PsbY, PsbZ, Psb30/Ycf12, at least 3 peripheral proteins of the oxygen-evolving complex and a large number of cofactors. It forms dimeric complexes. It depends on Binds multiple chlorophylls. PSII binds additional chlorophylls, carotenoids and specific lipids. as a cofactor.

Its subcellular location is the plastid. The protein localises to the chloroplast thylakoid membrane. In terms of biological role, one of the components of the core complex of photosystem II (PSII). It binds chlorophyll and helps catalyze the primary light-induced photochemical processes of PSII. PSII is a light-driven water:plastoquinone oxidoreductase, using light energy to abstract electrons from H(2)O, generating O(2) and a proton gradient subsequently used for ATP formation. The sequence is that of Photosystem II CP47 reaction center protein from Cryptomeria japonica (Japanese cedar).